Reading from the N-terminus, the 423-residue chain is NDP-N-acetyl-D-galactosaminuronic acid dehydrogenase (423 aa).

11 to 28 (TISVVGLGYIGLPTATVL) is an NAD(+) binding site. Residue lysine 218 is the Proton donor/acceptor of the active site. Cysteine 272 acts as the Nucleophile in catalysis.

Belongs to the UDP-glucose/GDP-mannose dehydrogenase family.

Functionally, probably involved in the synthesis of sugar components of EPS I, by converting NDP-N-acetyl-D-galactosamine into NDP-N-acetyl-D-galactosaminuronic acid. The sequence is that of NDP-N-acetyl-D-galactosaminuronic acid dehydrogenase (epsD) from Ralstonia nicotianae (strain ATCC BAA-1114 / GMI1000) (Ralstonia solanacearum).